The following is a 195-amino-acid chain: MEQFISHTGVGVPLRRSNVDTDQIIPAVYLKRVTRTGFEDGLFARWREDPDFVLNQDTYKNGSILVAGPDFGTGSSREHAAWALMDYGFRVVISARFADIFRGNAGKNGLVAAQMTEEDIELIWKLLDEQPGRTMTVDLEERTVTVGDAVFGFDIDDHTRWRLMEGLDDIALTLRNEDAITQYEKSRSPFMPRTI.

Belongs to the LeuD family. LeuD type 1 subfamily. As to quaternary structure, heterodimer of LeuC and LeuD.

The catalysed reaction is (2R,3S)-3-isopropylmalate = (2S)-2-isopropylmalate. It participates in amino-acid biosynthesis; L-leucine biosynthesis; L-leucine from 3-methyl-2-oxobutanoate: step 2/4. Catalyzes the isomerization between 2-isopropylmalate and 3-isopropylmalate, via the formation of 2-isopropylmaleate. The chain is 3-isopropylmalate dehydratase small subunit from Corynebacterium kroppenstedtii (strain DSM 44385 / JCM 11950 / CIP 105744 / CCUG 35717).